Consider the following 534-residue polypeptide: Signal recognition particle subunit SRP54 (534 aa).

The interval 1–296 (MVLQDLGRRI…EPKAFIQKLL (296 aa)) is G-domain. GTP contacts are provided by residues 109–116 (GLQGAGKT), 191–195 (DTSGR), and 249–252 (TKTD). The segment at 297–534 (GMGDMAGLVE…GGGGGRGRGR (238 aa)) is M-domain.

It belongs to the GTP-binding SRP family. SRP54 subfamily. As to quaternary structure, fungal signal recognition particle consists of a 7S RNA molecule (scR1) and at least six protein subunits: srp72, srp68, srpA/srp54, sec65, srp21 and srp14.

It localises to the cytoplasm. The protein resides in the endoplasmic reticulum. It catalyses the reaction GTP + H2O = GDP + phosphate + H(+). Functionally, signal-recognition-particle (SRP) assembly has a crucial role in targeting secretory proteins to the rough endoplasmic reticulum (ER) membrane. SRP is required for the cotranslational protein translocation for ER import and preferentially recognizes strongly hydrophobic signal sequences. It is involved in targeting the nascent chain-ribosome (RNC) complex to the ER and is proposed to participate in the arrest of nascent chain elongation during membrane targeting. srpA/srp54 binds to the signal sequence of presecretory protein when they emerge from the ribosomes. srpA/srp54 interacts with the scR1 RNA and mediates the association of the resulting SRP-RNC complex with the signal recognition particle receptor (SR) via its alpha subunit srp101. Both, srpA/srp54 and srp101, are locked in their GTP bound forms in the SRP-RNC-SR complex, which dissociates upon transferring the signal sequence to the protein-conducting channel (translocon). After signal sequence transfer, srpA/srp54 and srp101 act as reciprocal GTPase-activating proteins (GAPs), thereby resolving their association. The polypeptide is Signal recognition particle subunit SRP54 (srpA) (Aspergillus niger).